The sequence spans 664 residues: Peroxisomal acyl-coenzyme A oxidase 1 (664 aa).

Positions 135, 137, 138, 144, 177, 310, 330, 333, 401, and 422 each coordinate FAD. Glutamate 424 acts as the Proton acceptor in catalysis. Aspartate 426 provides a ligand contact to FAD. The cysteines at positions 467 and 576 are disulfide-linked. Residues 662–664 (ARL) carry the Microbody targeting signal motif.

This sequence belongs to the acyl-CoA oxidase family. In terms of assembly, homodimer. Requires FAD as cofactor. Expressed mainly in flowers and young seedlings. Lower expression in roots, leaves and bracts.

It is found in the peroxisome. It catalyses the reaction a 2,3-saturated acyl-CoA + O2 = a (2E)-enoyl-CoA + H2O2. Functionally, catalyzes the desaturation of both long- and medium-chain acyl-CoAs to 2-trans-enoyl-CoAs. Most active with C14-CoA. Activity on long-chain mono-unsaturated substrates is 40% higher than with the corresponding saturated substrates. Seems to be an important factor in the general metabolism of root tips. May be involved in the biosynthesis of jasmonic acid. This chain is Peroxisomal acyl-coenzyme A oxidase 1, found in Arabidopsis thaliana (Mouse-ear cress).